An 809-amino-acid polypeptide reads, in one-letter code: Mediator of RNA polymerase II transcription subunit 15 (809 aa).

3 disordered regions span residues 115-137, 183-211, and 413-549; these read AMQGVAGGQQGAGAAGPMQQMIQ, QLQQHHQNQQMQHQNQQQQQAQNQQQQNQ, and GQMM…ASQS. The span at 119-128 shows a compositional bias: gly residues; that stretch reads VAGGQQGAGA. Low complexity predominate over residues 446–467; sequence QQMPQAQQMMSSPSPVQVQTPQ. Over residues 468-484 the composition is skewed to pro residues; it reads SMPPPPQPQPSPQPPSS. Low complexity-rich tracts occupy residues 485–502 and 510–520; these read QPNSVSSGPTPSPGGFQP and QSPASSRTPQS. Polar residues predominate over residues 533 to 549; it reads TPGNPSSVMSPAGASQS.

The protein belongs to the Mediator complex subunit 15 family. As to quaternary structure, component of the Mediator complex. Interacts with srebf1 and srebf2. Interacts with smad2, smad3 and smad4.

It is found in the cytoplasm. It localises to the nucleus. Functionally, component of the Mediator complex, a coactivator involved in the regulated transcription of nearly all RNA polymerase II-dependent genes. Mediator functions as a bridge to convey information from gene-specific regulatory proteins to the basal RNA polymerase II transcription machinery. Mediator is recruited to promoters by direct interactions with regulatory proteins and serves as a scaffold for the assembly of a functional preinitiation complex with RNA polymerase II and the general transcription factors. Required for cholesterol-dependent gene regulation. Positively regulates the Nodal signaling pathway. This chain is Mediator of RNA polymerase II transcription subunit 15 (med15), found in Danio rerio (Zebrafish).